A 328-amino-acid chain; its full sequence is Ribosomal RNA large subunit methyltransferase F (328 aa).

The segment at 1-31 (MTDTRKPPRKKPQRPAKPAAPREKATLHPRN) is disordered.

This sequence belongs to the methyltransferase superfamily. METTL16/RlmF family.

The protein resides in the cytoplasm. The catalysed reaction is adenosine(1618) in 23S rRNA + S-adenosyl-L-methionine = N(6)-methyladenosine(1618) in 23S rRNA + S-adenosyl-L-homocysteine + H(+). Specifically methylates the adenine in position 1618 of 23S rRNA. The polypeptide is Ribosomal RNA large subunit methyltransferase F (Pseudomonas savastanoi pv. phaseolicola (strain 1448A / Race 6) (Pseudomonas syringae pv. phaseolicola (strain 1448A / Race 6))).